Reading from the N-terminus, the 41-residue chain is Hemoglobin subunit beta (41 aa).

Residues 1–41 (LGNVLVCVLAHHFGKEFTPQVQAAYQKVVAGVANALAHKYH) form the Globin domain. K39 carries the post-translational modification N6-acetyllysine.

It belongs to the globin family. As to quaternary structure, heterotetramer of two alpha chains and two beta chains. In terms of tissue distribution, red blood cells.

Its function is as follows. Involved in oxygen transport from the lung to the various peripheral tissues. The protein is Hemoglobin subunit beta (HBB) of Colobus guereza (Mantled guereza).